Here is a 185-residue protein sequence, read N- to C-terminus: Pro-adrenomedullin (185 aa).

A signal peptide spans 1–21; sequence MKLVSVALMYLGSLAFLGADT. Arg41 carries the post-translational modification Arginine amide. Residues 45-92 constitute a propeptide that is removed on maturation; sequence ELRMSSSYPTGLADVKAGPAQTLIRPQDMKGASRSPEDSSPDAARIRV. The segment at 60 to 87 is disordered; the sequence is KAGPAQTLIRPQDMKGASRSPEDSSPDA. Cys110 and Cys115 form a disulfide bridge. The segment at 133 to 185 is disordered; sequence DNVAPRSKISPQGYGRRRRRSLPEAGPGRTLVSSKPQAHGAPAPPSGSAPHFL. At Tyr146 the chain carries Tyrosine amide. Residues 148–185 constitute a propeptide, preproAM C-terminal fragment; that stretch reads RRRRRSLPEAGPGRTLVSSKPQAHGAPAPPSGSAPHFL.

This sequence belongs to the adrenomedullin family. Highest levels found in pheochromocytoma and adrenal medulla. Also found in lung, ventricle and kidney tissues.

The protein resides in the secreted. Adrenomedullin/ADM and proadrenomedullin N-20 terminal peptide/PAMP are peptide hormones that act as potent hypotensive and vasodilatator agents. Numerous actions have been reported most related to the physiologic control of fluid and electrolyte homeostasis. In the kidney, ADM is diuretic and natriuretic, and both ADM and PAMP inhibit aldosterone secretion by direct adrenal actions. In pituitary gland, both peptides at physiologically relevant doses inhibit basal ACTH secretion. Both peptides appear to act in brain and pituitary gland to facilitate the loss of plasma volume, actions which complement their hypotensive effects in blood vessels. In terms of biological role, ADM function is mediated by the CALCRL-RAMP2 and CALCRL-RAMP3 receptor complexes with ADM showing the highest potency for the CALCRL-RAMP2 complex. The sequence is that of Pro-adrenomedullin from Homo sapiens (Human).